The following is a 203-amino-acid chain: Thymidylate kinase (203 aa).

Residue 10–17 coordinates ATP; that stretch reads GTEGSGKS.

Belongs to the thymidylate kinase family.

The enzyme catalyses dTMP + ATP = dTDP + ADP. In terms of biological role, phosphorylation of dTMP to form dTDP in both de novo and salvage pathways of dTTP synthesis. This Dichelobacter nodosus (strain VCS1703A) protein is Thymidylate kinase.